The chain runs to 382 residues: Mannitol-1-phosphate 5-dehydrogenase (382 aa).

3–14 (ALHFGAGNIGRG) provides a ligand contact to NAD(+). Lys-269 carries the N6-acetyllysine modification.

The protein belongs to the mannitol dehydrogenase family.

It carries out the reaction D-mannitol 1-phosphate + NAD(+) = beta-D-fructose 6-phosphate + NADH + H(+). The protein is Mannitol-1-phosphate 5-dehydrogenase of Escherichia coli O17:K52:H18 (strain UMN026 / ExPEC).